A 340-amino-acid polypeptide reads, in one-letter code: MSTDKITFLLNWQPTPYHIPIFLAQTKGYFKEQGLDIAILEPTNPSDVTELIGSGKVDMGLKAMIHTLAAKARGFPVTSVASLLDEPFTGVLYLKGSGITEDFQSLKGKKIGYVGEFGKIQIDELTKHYGMKPEDYTAVRCGMNVAKYIIEDKIDAGIGIECMQQVELEEYLAKQGRPASDAKMLRIDKLACLGCCCFCTVLYICNDEFLKKNPEKVRKFLKAIKKATDYVLADPVKAWKEYIDFKPQLNNDLSYKQYQRCYAYFSSSLYNVHRDWKKVTGYGKRLAILPPDYVSNYTNEYLSWPEPEEVSDPLEAQRLMAIHQEKCRQEGTFKRLALPA.

K62 carries the post-translational modification N6-(pyridoxal phosphate)lysine. H66 is a catalytic residue. A pyridoxal 5'-phosphate-binding site is contributed by 115-118 (GEFG). The CCCFC; essential for catalytic activity, may be the site of iron coordination motif lies at 195-199 (CCCFC).

The protein belongs to the NMT1/THI5 family. In terms of assembly, homodimer. Fe cation is required as a cofactor.

The catalysed reaction is N(6)-(pyridoxal phosphate)-L-lysyl-[4-amino-5-hydroxymethyl-2-methylpyrimidine phosphate synthase] + L-histidyl-[4-amino-5-hydroxymethyl-2-methylpyrimidine phosphate synthase] + 2 Fe(3+) + 4 H2O = L-lysyl-[4-amino-5-hydroxymethyl-2-methylpyrimidine phosphate synthase] + (2S)-2-amino-5-hydroxy-4-oxopentanoyl-[4-amino-5-hydroxymethyl-2-methylpyrimidine phosphate synthase] + 4-amino-2-methyl-5-(phosphooxymethyl)pyrimidine + 3-oxopropanoate + 2 Fe(2+) + 2 H(+). It functions in the pathway cofactor biosynthesis; thiamine diphosphate biosynthesis. Functionally, responsible for the formation of the pyrimidine heterocycle in the thiamine biosynthesis pathway. Catalyzes the formation of hydroxymethylpyrimidine phosphate (HMP-P) from histidine and pyridoxal phosphate (PLP). The protein uses PLP and the active site histidine to form HMP-P, generating an inactive enzyme. The enzyme can only undergo a single turnover, which suggests it is a suicide enzyme. This Saccharomyces cerevisiae (strain ATCC 204508 / S288c) (Baker's yeast) protein is 4-amino-5-hydroxymethyl-2-methylpyrimidine phosphate synthase THI11.